A 362-amino-acid polypeptide reads, in one-letter code: Guanine nucleotide-binding protein alpha-10 subunit (362 aa).

Gly-2 carries the N-myristoyl glycine lipid modification. The S-palmitoyl cysteine moiety is linked to residue Cys-4. The G-alpha domain occupies 35-362 (LEQSVLLIGP…QENLKDTGMI (328 aa)). The G1 motif stretch occupies residues 38-51 (SVLLIGPGESGKST). GTP-binding positions include 43–50 (GPGESGKS), 184–190 (VRIRVPT), 209–213 (DCGGQ), 278–281 (NKID), and Ala-335. Mg(2+)-binding residues include Ser-50 and Thr-190. Residues 182–190 (DIVRIRVPT) are G2 motif. Residues 205 to 214 (LSVIDCGGQR) are G3 motif. Residues 274-281 (ILFLNKID) are G4 motif. The G5 motif stretch occupies residues 333–337 (TCAIS).

Belongs to the G-alpha family. G proteins are composed of 3 units; alpha, beta and gamma. The alpha chain contains the guanine nucleotide binding site.

Its function is as follows. Guanine nucleotide-binding proteins (G proteins) are involved as modulators or transducers in various transmembrane signaling systems. The sequence is that of Guanine nucleotide-binding protein alpha-10 subunit (gpa-10) from Caenorhabditis briggsae.